A 295-amino-acid polypeptide reads, in one-letter code: Pyridoxal 5'-phosphate synthase subunit PdxS (295 aa).

Aspartate 25 contributes to the D-ribose 5-phosphate binding site. Residue lysine 82 is the Schiff-base intermediate with D-ribose 5-phosphate of the active site. Glycine 154 lines the D-ribose 5-phosphate pocket. Residue arginine 166 coordinates D-glyceraldehyde 3-phosphate. D-ribose 5-phosphate contacts are provided by residues glycine 215 and 236–237 (GS).

Belongs to the PdxS/SNZ family. In the presence of PdxT, forms a dodecamer of heterodimers.

The enzyme catalyses aldehydo-D-ribose 5-phosphate + D-glyceraldehyde 3-phosphate + L-glutamine = pyridoxal 5'-phosphate + L-glutamate + phosphate + 3 H2O + H(+). It participates in cofactor biosynthesis; pyridoxal 5'-phosphate biosynthesis. In terms of biological role, catalyzes the formation of pyridoxal 5'-phosphate from ribose 5-phosphate (RBP), glyceraldehyde 3-phosphate (G3P) and ammonia. The ammonia is provided by the PdxT subunit. Can also use ribulose 5-phosphate and dihydroxyacetone phosphate as substrates, resulting from enzyme-catalyzed isomerization of RBP and G3P, respectively. This Staphylococcus carnosus (strain TM300) protein is Pyridoxal 5'-phosphate synthase subunit PdxS.